The sequence spans 169 residues: uncharacterized protein (169 aa).

N-linked (GlcNAc...) asparagine; by host glycosylation is found at Asn-13, Asn-29, Asn-39, and Asn-48. The Cell attachment site motif lies at 109–111; the sequence is RGD. Asn-135 carries an N-linked (GlcNAc...) asparagine; by host glycan. Residues 145 to 165 traverse the membrane as a helical segment; sequence IYHMAIVYILIMYQIYILSLI.

It localises to the membrane. This is an uncharacterized protein from Acanthamoeba polyphaga (Amoeba).